The chain runs to 541 residues: Chaperonin GroEL (541 aa).

Residues 30–33 (TLGP), K51, 87–91 (DGTTT), G415, 479–481 (NAA), and D495 contribute to the ATP site.

This sequence belongs to the chaperonin (HSP60) family. In terms of assembly, forms a cylinder of 14 subunits composed of two heptameric rings stacked back-to-back. Interacts with the co-chaperonin GroES.

It localises to the cytoplasm. The catalysed reaction is ATP + H2O + a folded polypeptide = ADP + phosphate + an unfolded polypeptide.. Together with its co-chaperonin GroES, plays an essential role in assisting protein folding. The GroEL-GroES system forms a nano-cage that allows encapsulation of the non-native substrate proteins and provides a physical environment optimized to promote and accelerate protein folding. The protein is Chaperonin GroEL of Acinetobacter baumannii (strain SDF).